The sequence spans 233 residues: Probable septum site-determining protein MinC (233 aa).

Residues 104–124 (QKMATPEPAPAPAPVVDPNAP) form a disordered region.

It belongs to the MinC family. Interacts with MinD and FtsZ.

Functionally, cell division inhibitor that blocks the formation of polar Z ring septums. Rapidly oscillates between the poles of the cell to destabilize FtsZ filaments that have formed before they mature into polar Z rings. Prevents FtsZ polymerization. The protein is Probable septum site-determining protein MinC of Serratia proteamaculans (strain 568).